The following is a 127-amino-acid chain: Large ribosomal subunit protein bL17 (127 aa).

Belongs to the bacterial ribosomal protein bL17 family. In terms of assembly, part of the 50S ribosomal subunit. Contacts protein L32.

This chain is Large ribosomal subunit protein bL17, found in Legionella pneumophila (strain Lens).